The chain runs to 90 residues: Probable Fe(2+)-trafficking protein (90 aa).

Belongs to the Fe(2+)-trafficking protein family.

Could be a mediator in iron transactions between iron acquisition and iron-requiring processes, such as synthesis and/or repair of Fe-S clusters in biosynthetic enzymes. The protein is Probable Fe(2+)-trafficking protein of Idiomarina loihiensis (strain ATCC BAA-735 / DSM 15497 / L2-TR).